A 444-amino-acid chain; its full sequence is Enolase (444 aa).

H163 and E172 together coordinate substrate. E215 (proton donor) is an active-site residue. D250, E300, and D327 together coordinate Mg(2+). Positions 300 and 327 each coordinate substrate. The active-site Proton acceptor is K352. Substrate-binding positions include 379–382 and K403; that span reads SHRS.

Belongs to the enolase family. Homodimer. The cofactor is Mg(2+).

It is found in the cytoplasm. It catalyses the reaction (2R)-2-phosphoglycerate = phosphoenolpyruvate + H2O. It participates in carbohydrate degradation; glycolysis; pyruvate from D-glyceraldehyde 3-phosphate: step 4/5. The protein is Enolase (PGH1) of Solanum lycopersicum (Tomato).